We begin with the raw amino-acid sequence, 226 residues long: Exopolysaccharide production protein ExoY (226 aa).

Residues 34–54 form a helical membrane-spanning segment; that stretch reads VLIAILALIALSPLFLLVMGL.

It belongs to the bacterial sugar transferase family.

The protein localises to the cell membrane. Its pathway is glycan metabolism; exopolysaccharide biosynthesis. In terms of biological role, needed for the addition of the first sugar (galactose) to the isoprenoid carrier. May function as a sugar transferase. This is Exopolysaccharide production protein ExoY (exoY) from Sinorhizobium fredii (strain NBRC 101917 / NGR234).